The sequence spans 174 residues: ATP synthase subunit d, mitochondrial (174 aa).

Ser-2 is subject to N-acetylserine.

Belongs to the ATPase d subunit family. As to quaternary structure, F-type ATPases have 2 components, CF(1) - the catalytic core - and CF(0) - the membrane proton channel. In yeast, the dimeric form of ATP synthase consists of 17 polypeptides: alpha, beta, gamma, delta, epsilon, 4 (B), 5 (OSCP), 6 (A), 8, 9 (C), d, E (Tim11), f, g, h, i/j and k.

The protein localises to the mitochondrion. It localises to the mitochondrion inner membrane. Its function is as follows. Mitochondrial membrane ATP synthase (F(1)F(0) ATP synthase or Complex V) produces ATP from ADP in the presence of a proton gradient across the membrane which is generated by electron transport complexes of the respiratory chain. F-type ATPases consist of two structural domains, F(1) - containing the extramembraneous catalytic core, and F(0) - containing the membrane proton channel, linked together by a central stalk and a peripheral stalk. During catalysis, ATP synthesis in the catalytic domain of F(1) is coupled via a rotary mechanism of the central stalk subunits to proton translocation. Part of the complex F(0) domain and the peripheric stalk, which acts as a stator to hold the catalytic alpha(3)beta(3) subcomplex and subunit a/ATP6 static relative to the rotary elements. The sequence is that of ATP synthase subunit d, mitochondrial (ATP7) from Saccharomyces cerevisiae (strain ATCC 204508 / S288c) (Baker's yeast).